A 490-amino-acid chain; its full sequence is Probable cytosol aminopeptidase (490 aa).

Mn(2+) contacts are provided by Lys255 and Asp260. Lys267 is a catalytic residue. Asp278, Asp337, and Glu339 together coordinate Mn(2+). Residue Arg341 is part of the active site.

It belongs to the peptidase M17 family. The cofactor is Mn(2+).

Its subcellular location is the cytoplasm. The catalysed reaction is Release of an N-terminal amino acid, Xaa-|-Yaa-, in which Xaa is preferably Leu, but may be other amino acids including Pro although not Arg or Lys, and Yaa may be Pro. Amino acid amides and methyl esters are also readily hydrolyzed, but rates on arylamides are exceedingly low.. It catalyses the reaction Release of an N-terminal amino acid, preferentially leucine, but not glutamic or aspartic acids.. Functionally, presumably involved in the processing and regular turnover of intracellular proteins. Catalyzes the removal of unsubstituted N-terminal amino acids from various peptides. The sequence is that of Probable cytosol aminopeptidase from Gluconobacter oxydans (strain 621H) (Gluconobacter suboxydans).